The primary structure comprises 572 residues: Proline--tRNA ligase (572 aa).

The protein belongs to the class-II aminoacyl-tRNA synthetase family. ProS type 1 subfamily. As to quaternary structure, homodimer.

The protein localises to the cytoplasm. The catalysed reaction is tRNA(Pro) + L-proline + ATP = L-prolyl-tRNA(Pro) + AMP + diphosphate. Catalyzes the attachment of proline to tRNA(Pro) in a two-step reaction: proline is first activated by ATP to form Pro-AMP and then transferred to the acceptor end of tRNA(Pro). As ProRS can inadvertently accommodate and process non-cognate amino acids such as alanine and cysteine, to avoid such errors it has two additional distinct editing activities against alanine. One activity is designated as 'pretransfer' editing and involves the tRNA(Pro)-independent hydrolysis of activated Ala-AMP. The other activity is designated 'posttransfer' editing and involves deacylation of mischarged Ala-tRNA(Pro). The misacylated Cys-tRNA(Pro) is not edited by ProRS. This chain is Proline--tRNA ligase, found in Bacillus licheniformis (strain ATCC 14580 / DSM 13 / JCM 2505 / CCUG 7422 / NBRC 12200 / NCIMB 9375 / NCTC 10341 / NRRL NRS-1264 / Gibson 46).